A 242-amino-acid chain; its full sequence is Leucyl/phenylalanyl-tRNA--protein transferase (242 aa).

This sequence belongs to the L/F-transferase family.

The protein resides in the cytoplasm. It carries out the reaction N-terminal L-lysyl-[protein] + L-leucyl-tRNA(Leu) = N-terminal L-leucyl-L-lysyl-[protein] + tRNA(Leu) + H(+). The catalysed reaction is N-terminal L-arginyl-[protein] + L-leucyl-tRNA(Leu) = N-terminal L-leucyl-L-arginyl-[protein] + tRNA(Leu) + H(+). It catalyses the reaction L-phenylalanyl-tRNA(Phe) + an N-terminal L-alpha-aminoacyl-[protein] = an N-terminal L-phenylalanyl-L-alpha-aminoacyl-[protein] + tRNA(Phe). Functionally, functions in the N-end rule pathway of protein degradation where it conjugates Leu, Phe and, less efficiently, Met from aminoacyl-tRNAs to the N-termini of proteins containing an N-terminal arginine or lysine. This chain is Leucyl/phenylalanyl-tRNA--protein transferase, found in Alcanivorax borkumensis (strain ATCC 700651 / DSM 11573 / NCIMB 13689 / SK2).